Here is a 228-residue protein sequence, read N- to C-terminus: Transcription repressor OFP8 (228 aa).

Low complexity-rich tracts occupy residues 1–14 (MSGRSSRRGSFSLR), 54–79 (ASSTSTTTAFTATTGGAGTATSTDSS), and 92–101 (EEPAAAQQEQ). 2 disordered regions span residues 1 to 21 (MSGRSSRRGSFSLRQPPVVDI) and 36 to 143 (SSSS…QLQE). Residues 107-120 (RRRRRQQRRRRRRA) are compositionally biased toward basic residues. In terms of domain architecture, OVATE spans 157–216 (VAVESAEPYEDFRESMVQMVVEKEIYAWDDLNDLLHQFLSLNSPRHHPLILHAFADLWTR).

Interacts with GSK2. In terms of processing, phosphorylated on serine and threonine residues by GSK2. Dephosphorylated during response to brassinosteroid. Expressed in roots, stems, stem nodes, young leaves, leaf sheaths, lamina joints, young spikelets, inflorescences, stamens and ovaries, embryos and seeds.

The protein localises to the nucleus. The protein resides in the cytoplasm. Its function is as follows. Probable transcriptional repressor that regulates multiple aspects of plant growth and development, partly through brassinosteroid (BR) signaling pathway. Acts downstream of the kinase GSK2, a negative regulator of BR signaling. In Oryza sativa subsp. japonica (Rice), this protein is Transcription repressor OFP8.